Reading from the N-terminus, the 383-residue chain is MGAGGRMSVPPPPKKLESEVLKRVPHSKPPFTLGQLKKAIPPHCFQRSVLRSFSYVVYDLTVAFIFYYIATNYFHLLPQPLSYVAWPIYWALQGCVLTGVWVIAHECGHHAFSDYQLLDDIVGLVLHSCLLVPYFSWKHSHRRHHSNTASLERDEVFVPKKKSSIRWFSKYLNNPPGRLFTLTITLTLGWPLYLAFNVSGRPYDRFACHYDPYGPIYTDRERTEIYISDAGVLAVTFGLYRLAAAKGLAWVICVYGVPLLIVNAFLVMITYLQHTHPSIPHYDSSEWDWLRGALATVDRDYGILNKVFHNITDTHVAHHLFSTMPHYHAMEATKAIKPILGEYYQFDGTPFYKAMWREAKECIYVEADDGDESKGVYWYNKKF.

2 helical membrane passes run 56-76 and 84-104; these read VVYDLTVAFIFYYIATNYFHL and VAWPIYWALQGCVLTGVWVIA. The short motif at 105-109 is the Histidine box-1 element; the sequence is HECGH. A helical membrane pass occupies residues 117–137; the sequence is LLDDIVGLVLHSCLLVPYFSW. The Histidine box-2 signature appears at 141–145; sequence HRRHH. 3 helical membrane-spanning segments follow: residues 179–199, 225–245, and 249–269; these read LFTLTITLTLGWPLYLAFNVS, IYISDAGVLAVTFGLYRLAAA, and AWVICVYGVPLLIVNAFLVMI. The Histidine box-3 motif lies at 315–319; the sequence is HVAHH.

It belongs to the fatty acid desaturase type 1 family. As to expression, expressed in leaves and seeds.

The protein resides in the endoplasmic reticulum membrane. The enzyme catalyses (9Z)-octadecenoyl-CoA + 2 Fe(II)-[cytochrome b5] + O2 + 2 H(+) = (9Z,12Z)-octadecadienoyl-CoA + 2 Fe(III)-[cytochrome b5] + 2 H2O. It catalyses the reaction (9Z)-hexadecenoyl-CoA + 2 Fe(II)-[cytochrome b5] + O2 + 2 H(+) = (9Z,12Z)-hexadecadienoyl-CoA + 2 Fe(III)-[cytochrome b5] + 2 H2O. It functions in the pathway lipid metabolism; polyunsaturated fatty acid biosynthesis. Catalyzes the desaturation of oleic acid (18:1(9Z)) to linoleic acid (18:2(9Z,12Z)). This chain is Delta(12)-fatty-acid desaturase FAD2, found in Vernicia fordii (Tung).